A 164-amino-acid polypeptide reads, in one-letter code: Endoribonuclease YbeY (164 aa).

Residues histidine 125, histidine 129, and histidine 135 each coordinate Zn(2+).

This sequence belongs to the endoribonuclease YbeY family. Zn(2+) serves as cofactor.

It localises to the cytoplasm. In terms of biological role, single strand-specific metallo-endoribonuclease involved in late-stage 70S ribosome quality control and in maturation of the 3' terminus of the 16S rRNA. This is Endoribonuclease YbeY from Paramagnetospirillum magneticum (strain ATCC 700264 / AMB-1) (Magnetospirillum magneticum).